The sequence spans 349 residues: UDP-3-O-acylglucosamine N-acyltransferase (349 aa).

Histidine 242 functions as the Proton acceptor in the catalytic mechanism.

This sequence belongs to the transferase hexapeptide repeat family. LpxD subfamily. As to quaternary structure, homotrimer.

It carries out the reaction a UDP-3-O-[(3R)-3-hydroxyacyl]-alpha-D-glucosamine + a (3R)-hydroxyacyl-[ACP] = a UDP-2-N,3-O-bis[(3R)-3-hydroxyacyl]-alpha-D-glucosamine + holo-[ACP] + H(+). It functions in the pathway bacterial outer membrane biogenesis; LPS lipid A biosynthesis. Catalyzes the N-acylation of UDP-3-O-acylglucosamine using 3-hydroxyacyl-ACP as the acyl donor. Is involved in the biosynthesis of lipid A, a phosphorylated glycolipid that anchors the lipopolysaccharide to the outer membrane of the cell. This is UDP-3-O-acylglucosamine N-acyltransferase from Cytophaga hutchinsonii (strain ATCC 33406 / DSM 1761 / CIP 103989 / NBRC 15051 / NCIMB 9469 / D465).